The sequence spans 120 residues: Alpha-amylase inhibitor Haim-2 (120 aa).

The first 32 residues, 1–32, serve as a signal peptide directing secretion; it reads MKRYVCSTFVACVMVLCVIPASGAAAHEAVAE. 2 cysteine pairs are disulfide-bonded: cysteine 43–cysteine 59 and cysteine 77–cysteine 104.

Inhibits mammalian alpha-amylases specifically but has no action on plant and microbial alpha-amylases. The protein is Alpha-amylase inhibitor Haim-2 of Streptomyces griseosporeus.